A 116-amino-acid chain; its full sequence is Ig heavy chain V region 3-6 (116 aa).

An N-terminal signal peptide occupies residues 1 to 18; that stretch reads MKVLSLLYLLTAIPGILS. Positions 19–48 are framework-1; it reads DVQLQESGPGLVKPSQSLSLTCSVTGYSIT. Cysteine 40 and cysteine 114 are joined by a disulfide. The segment at 49 to 53 is complementarity-determining-1; the sequence is SGYYW. Residues 54–67 form a framework-2 region; the sequence is NWIRQFPGNKLEWM. A complementarity-determining-2 region spans residues 68-84; that stretch reads GYISYDGSNNYNPSLKN. Residues 85–116 form a framework-3 region; the sequence is RISITRDTSKNQFFLKLNSVTTEDTATYYCAR.

The protein is Ig heavy chain V region 3-6 (Ighv3-6) of Mus musculus (Mouse).